A 355-amino-acid polypeptide reads, in one-letter code: Methylthioribose-1-phosphate isomerase (355 aa).

Substrate is bound by residues arginine 50–alanine 52, arginine 93, and glutamine 198. The active-site Proton donor is the aspartate 239. Asparagine 249 to lysine 250 provides a ligand contact to substrate.

It belongs to the eIF-2B alpha/beta/delta subunits family. MtnA subfamily. Homodimer.

It carries out the reaction 5-(methylsulfanyl)-alpha-D-ribose 1-phosphate = 5-(methylsulfanyl)-D-ribulose 1-phosphate. It functions in the pathway amino-acid biosynthesis; L-methionine biosynthesis via salvage pathway; L-methionine from S-methyl-5-thio-alpha-D-ribose 1-phosphate: step 1/6. Catalyzes the interconversion of methylthioribose-1-phosphate (MTR-1-P) into methylthioribulose-1-phosphate (MTRu-1-P). The protein is Methylthioribose-1-phosphate isomerase of Geobacillus thermodenitrificans (strain NG80-2).